Consider the following 409-residue polypeptide: Terpredoxin reductase (409 aa).

FAD is bound at residue 7 to 38; it reads TTVIVGAGHAGTAAAFFLREFGYHGRVLLLSA. An NAD(+)-binding site is contributed by 151-159; sequence GGGFIGLEI.

FAD is required as a cofactor.

Functionally, the oxidation of alpha-terpineol by cytochrome p450-TERP requires the participation of a flavoprotein, terpredoxin reductase, and an iron-sulfur protein, terpredoxin, to mediate the transfer of electrons from NADH to P450 for oxygen activation. The chain is Terpredoxin reductase (terPA) from Pseudomonas sp.